Here is an 805-residue protein sequence, read N- to C-terminus: Leucine--tRNA ligase (805 aa).

The 'HIGH' region signature appears at 40–51 (PYPSGAGLHVGH). A 'KMSKS' region motif is present at residues 576 to 580 (KMSKS). Lysine 579 serves as a coordination point for ATP.

It belongs to the class-I aminoacyl-tRNA synthetase family.

It localises to the cytoplasm. The enzyme catalyses tRNA(Leu) + L-leucine + ATP = L-leucyl-tRNA(Leu) + AMP + diphosphate. The sequence is that of Leucine--tRNA ligase from Geobacillus kaustophilus (strain HTA426).